The sequence spans 306 residues: Pantothenate kinase (306 aa).

An ATP-binding site is contributed by 90–97; the sequence is GSVAVGKS.

It belongs to the prokaryotic pantothenate kinase family.

It localises to the cytoplasm. It carries out the reaction (R)-pantothenate + ATP = (R)-4'-phosphopantothenate + ADP + H(+). It functions in the pathway cofactor biosynthesis; coenzyme A biosynthesis; CoA from (R)-pantothenate: step 1/5. The sequence is that of Pantothenate kinase from Listeria monocytogenes serotype 4b (strain CLIP80459).